A 263-amino-acid chain; its full sequence is Esterase mokD (263 aa).

Residues serine 134, aspartate 208, and histidine 236 each act as charge relay system in the active site.

The protein belongs to the LovG family.

The enzyme catalyses dihydromonacolin L-[lovastatin nonaketide synthase] + H2O = holo-[lovastatin nonaketide synthase] + dihydromonacolin L carboxylate + H(+). The protein operates within polyketide biosynthesis; lovastatin biosynthesis. Esterase; part of the gene cluster that mediates the biosynthesis of monakolin K, also known as lovastatin, and which acts as a potent competitive inhibitor of HMG-CoA reductase. Monakolin K biosynthesis is performed in two stages. The first stage is catalyzed by the nonaketide synthase mokA, which belongs to type I polyketide synthases and catalyzes the iterative nine-step formation of the polyketide. This PKS stage completed by the action of dehydrogenase mokE, which catalyzes the NADPH-dependent reduction of the unsaturated tetra-, penta- and heptaketide intermediates that arise during the mokA-mediated biosynthesis of the nonaketide chain and leads to dihydromonacolin L. Covalently bound dihydromonacolin L is released from mokA by the mokD esterase. Conversion of dihydromonacolin L into monacolin L and then monacolin J is subsequently performed with the participation of molecular oxygen and P450 monoogygenase mokC. Finally, mokF performs the conversion of monacoline J to monacoline K through the addition of the side-chain diketide moiety (2R)-2-methylbutanoate produced by the diketide synthase mokB. The polypeptide is Esterase mokD (Monascus pilosus (Red mold)).